We begin with the raw amino-acid sequence, 242 residues long: Proteasome subunit alpha (242 aa).

The protein belongs to the peptidase T1A family. In terms of assembly, the 20S proteasome core is composed of 14 alpha and 14 beta subunits that assemble into four stacked heptameric rings, resulting in a barrel-shaped structure. The two inner rings, each composed of seven catalytic beta subunits, are sandwiched by two outer rings, each composed of seven alpha subunits. The catalytic chamber with the active sites is on the inside of the barrel. Has a gated structure, the ends of the cylinder being occluded by the N-termini of the alpha-subunits. Is capped by the proteasome-associated ATPase, ARC.

The protein localises to the cytoplasm. Its pathway is protein degradation; proteasomal Pup-dependent pathway. The formation of the proteasomal ATPase ARC-20S proteasome complex, likely via the docking of the C-termini of ARC into the intersubunit pockets in the alpha-rings, may trigger opening of the gate for substrate entry. Interconversion between the open-gate and close-gate conformations leads to a dynamic regulation of the 20S proteasome proteolysis activity. Functionally, component of the proteasome core, a large protease complex with broad specificity involved in protein degradation. This chain is Proteasome subunit alpha, found in Renibacterium salmoninarum (strain ATCC 33209 / DSM 20767 / JCM 11484 / NBRC 15589 / NCIMB 2235).